A 218-amino-acid chain; its full sequence is Glutathione S-transferase-like protein OpS6 (218 aa).

A GST N-terminal domain is found at 5-86; it reads QPIKLYAHKK…YLIEQYDKDG (82 aa). The region spanning 92–218 is the GST C-terminal domain; sequence SLQDKSLARA…KIAATKAALA (127 aa).

The protein belongs to the GST superfamily.

It participates in secondary metabolite biosynthesis. In terms of biological role, glutathione S-transferase-like protein; part of the gene cluster that mediates the biosynthesis of the bibenzoquinone oosporein, a metabolite required for fungal virulence that acts by evading host immunity to facilitate fungal multiplication in insects. The non-reducing polyketide synthase OpS1 produces orsellinic acid by condensing acetyl-CoA with 3 malonyl-CoA units. Orsellinic acid is then hydroxylated to benzenetriol by the hydroxylase OpS4. The intermediate is oxidized either nonenzymatically to 5,5'-dideoxy-oosporein or enzymatically to benzenetetrol by the oxidoreductase OpS7. The latter is further dimerized to oosporein by the catalase OpS5. OpS6 probably functions en route for protecting cells against oxidative stress by scavenging any leaked free radical form of benzenetetrol by activating the thiol group of glutathione. This is Glutathione S-transferase-like protein OpS6 from Beauveria bassiana (strain ARSEF 2860) (White muscardine disease fungus).